Reading from the N-terminus, the 346-residue chain is Haptoglobin (346 aa).

A signal peptide spans M1 to A18. The 57-residue stretch at D31 to A87 folds into the Sushi domain. 4 cysteine pairs are disulfide-bonded: C52/C85, C89/C206, C249/C280, and C291/C321. Positions I102 to A344 constitute a Peptidase S1 domain. N-linked (GlcNAc...) asparagine glycans are attached at residues N147 and N181. Residues V258 to G263 form an interaction with CD163 region.

Belongs to the peptidase S1 family. Tetramer of two alpha and two beta chains; disulfide-linked. The hemoglobin/haptoglobin complex is composed of a haptoglobin dimer bound to two hemoglobin alpha-beta dimers. Interacts with CD163. Interacts with ERGIC3. Expressed by the liver and secreted in plasma.

It localises to the secreted. In terms of biological role, as a result of hemolysis, hemoglobin is found to accumulate in the kidney and is secreted in the urine. Haptoglobin captures, and combines with free plasma hemoglobin to allow hepatic recycling of heme iron and to prevent kidney damage. Haptoglobin also acts as an antioxidant, has antibacterial activity and plays a role in modulating many aspects of the acute phase response. Hemoglobin/haptoglobin complexes are rapidly cleared by the macrophage CD163 scavenger receptor expressed on the surface of liver Kupfer cells through an endocytic lysosomal degradation pathway. This is Haptoglobin (HP) from Mesocricetus auratus (Golden hamster).